Here is a 166-residue protein sequence, read N- to C-terminus: Large ribosomal subunit protein uL10 (166 aa).

This sequence belongs to the universal ribosomal protein uL10 family. Part of the ribosomal stalk of the 50S ribosomal subunit. The N-terminus interacts with L11 and the large rRNA to form the base of the stalk. The C-terminus forms an elongated spine to which L12 dimers bind in a sequential fashion forming a multimeric L10(L12)X complex.

Functionally, forms part of the ribosomal stalk, playing a central role in the interaction of the ribosome with GTP-bound translation factors. The chain is Large ribosomal subunit protein uL10 (rplJ) from Streptococcus pyogenes serotype M1.